Here is a 199-residue protein sequence, read N- to C-terminus: Cutinase CUT1 (199 aa).

Residues 1–18 form the signal peptide; the sequence is MKFTTLATLALGAVSALA. Positions 19–27 are excised as a propeptide; it reads APVTELESR. Gln28 carries the pyrrolidone carboxylic acid modification. Cys31 and Cys105 are joined by a disulfide. Ser116 (nucleophile) is an active-site residue. An intrachain disulfide couples Cys164 to Cys171. Asp168 is a catalytic residue. The active-site Proton donor/acceptor is His181.

This sequence belongs to the cutinase family. Post-translationally, the 2 disulfide bonds play a critical role in holding the catalytic residues in juxta-position; reduction of the disulfide bridges results in the complete inactivation of the enzyme.

The catalysed reaction is cutin + H2O = cutin monomers.. In terms of biological role, catalyzes the hydrolysis of complex carboxylic polyesters found in the cell wall of plants. Degrades cutin, a macromolecule that forms the structure of the plant cuticle. Also degrades suberin, a specialized macromolecule found in the cell wall of various plant tissues. The sequence is that of Cutinase CUT1 from Coprinopsis cinerea (Inky cap fungus).